Reading from the N-terminus, the 266-residue chain is MVLSDKKFVLVTGGSSGLGFETIKALIQTNQPYHVFLGCLFPDEGQSAVLSLQRDVPETPSTLESILVDVTDDESIDRCFHTVQSKIGHLDVLVNNAGISLQASEIGMREAWNRCYDVNVTGAQIMTHTFVPLLLRSNDPRLIFITSGLSSLTPMSNVYTPTRMTVPAGWPKPEVHPYRAYRATKTALNMVMLEWHWQLREDGVKTWGVSPGFLATNLGASFAGMDGAPPVLPASVGGRLVASVVEGDRDTDVGKIVLKDGEVQPF.

NADP(+)-binding residues include Leu18, Asp69, and Asn96. Catalysis depends on Ser147, which acts as the Proton donor. NADP(+) contacts are provided by Tyr181, Lys185, and Thr216. Tyr181 (proton acceptor) is an active-site residue. The active-site Lowers pKa of active site Tyr is Lys185.

The protein belongs to the short-chain dehydrogenases/reductases (SDR) family.

It participates in secondary metabolite biosynthesis. In terms of biological role, short-chain dehydrogenase/reductase; part of the gene cluster that mediates the biosynthesis of the tropolone class of fungal maleic anhydrides. The pathway begins with the synthesis of 3-methylorcinaldehyde by the non-reducing polyketide synthase (PKS) tropA. 3-methylorcinaldehyde is the substrate for the FAD-dependent monooxygenase tropB to yield a dearomatized hydroxycyclohexadione. The 2-oxoglutarate-dependent dioxygenase tropC then performs the oxidative ring expansion to provide the first tropolone metabolite stipitaldehyde. Trop D converts stipitaldehyde into stipitacetal which is in turn converted to stipitalide by the short-chain dehydrogenase/reductase tropE. The next steps involve tropF, tropG, tropH, tropI and tropJ to form successive tropolone maleic anhydrides including stipitaldehydic, stipitatonic and stipitatic acids. This Talaromyces stipitatus (strain ATCC 10500 / CBS 375.48 / QM 6759 / NRRL 1006) (Penicillium stipitatum) protein is Short-chain dehydrogenase/reductase tropE.